The primary structure comprises 415 residues: MGGEAGADGPRGRVKSLGLVFEDESKGCYSSGETVAGHVLLEAAEPVALRGLRLEAQGRATSAWGPSAGARVCIGGGSPAASSEVEYLNLRLSLLEAPAGEGVTLLQPGKHEFPFRFQLPSEPLATSFTGKYGSIQYCVRAVLERPQVPDQSVRRELQVVSHVDVNTPPLLTPMLKTQEKMVGCWLFTSGPVSLSVKIERKGYCNGEAIPIYAEIENCSSRLVVPKAAIFQTQTYLASGKTKTVRHMVANVRGNHIGSGSTDTWNGKMLKIPPVTPSILDCCIIRVDYSLAVYIHIPGAKRLMLELPLVIGTIPYSGFGRRNSSVASQFSMDMCWLALALPEQPEAPPNYADVVSEEEFSRHVPPYPQPSDCDGEACYSMFACIQEFRFQPPPLYSEVDPHPGDAQETQPVSFIL.

2 short sequence motifs (PPxY motif) span residues 347–350 (PPNY) and 392–395 (PPLY).

It belongs to the arrestin family. As to quaternary structure, interacts with ADRB2. Interacts (via PPxY motifs) with ITCH, NEDD4L and WWP2. Interacts with AVPR2. Identified in a complex containing at least ARRDC4, AVPR2 and HGS. Interacts with SLC11A2; controls the incorporation of SLC11A2 into extracellular vesicles through an ubiquitination-dependent mechanism. Interacts with TRIM65.

The protein localises to the early endosome. Its subcellular location is the cell membrane. It localises to the cytoplasmic vesicle. Functionally, functions as an adapter recruiting ubiquitin-protein ligases to their specific substrates. Plays a role in endocytosis of activated G protein-coupled receptors (GPCRs). Through an ubiquitination-dependent mechanism also plays a role in the incorporation of SLC11A2 into extracellular vesicles. May play a role in glucose uptake. Participates in innate immune response by promoting IFIH1/MDA5 activation through interaction with TRIM65. The polypeptide is Arrestin domain-containing protein 4 (Mus musculus (Mouse)).